A 450-amino-acid chain; its full sequence is Bifunctional protein GlmU (450 aa).

Positions 1–217 are pyrophosphorylase; sequence MKTLILAAGL…VDEITGVNNR (217 aa). UDP-N-acetyl-alpha-D-glucosamine is bound by residues 6–9, Lys-20, Gln-68, 73–74, 95–97, Gly-134, Glu-146, Asn-161, and Asn-215; these read LAAG, GT, and YGD. Asp-97 contacts Mg(2+). Asn-215 contributes to the Mg(2+) binding site. Positions 218 to 238 are linker; sequence IQLANLEKKIRRKINEKLMNQ. Residues 239 to 450 form an N-acetyltransferase region; the sequence is GVRIIDPNAV…GGQKNANNKK (212 aa). 2 residues coordinate UDP-N-acetyl-alpha-D-glucosamine: Arg-320 and Lys-338. His-350 serves as the catalytic Proton acceptor. Residues Tyr-353 and Asn-364 each contribute to the UDP-N-acetyl-alpha-D-glucosamine site. Acetyl-CoA contacts are provided by residues Ala-367, 373-374, Ser-392, Ala-410, and Arg-427; that span reads NY.

In the N-terminal section; belongs to the N-acetylglucosamine-1-phosphate uridyltransferase family. It in the C-terminal section; belongs to the transferase hexapeptide repeat family. As to quaternary structure, homotrimer. Requires Mg(2+) as cofactor.

It is found in the cytoplasm. The catalysed reaction is alpha-D-glucosamine 1-phosphate + acetyl-CoA = N-acetyl-alpha-D-glucosamine 1-phosphate + CoA + H(+). It catalyses the reaction N-acetyl-alpha-D-glucosamine 1-phosphate + UTP + H(+) = UDP-N-acetyl-alpha-D-glucosamine + diphosphate. Its pathway is nucleotide-sugar biosynthesis; UDP-N-acetyl-alpha-D-glucosamine biosynthesis; N-acetyl-alpha-D-glucosamine 1-phosphate from alpha-D-glucosamine 6-phosphate (route II): step 2/2. The protein operates within nucleotide-sugar biosynthesis; UDP-N-acetyl-alpha-D-glucosamine biosynthesis; UDP-N-acetyl-alpha-D-glucosamine from N-acetyl-alpha-D-glucosamine 1-phosphate: step 1/1. It participates in bacterial outer membrane biogenesis; LPS lipid A biosynthesis. Catalyzes the last two sequential reactions in the de novo biosynthetic pathway for UDP-N-acetylglucosamine (UDP-GlcNAc). The C-terminal domain catalyzes the transfer of acetyl group from acetyl coenzyme A to glucosamine-1-phosphate (GlcN-1-P) to produce N-acetylglucosamine-1-phosphate (GlcNAc-1-P), which is converted into UDP-GlcNAc by the transfer of uridine 5-monophosphate (from uridine 5-triphosphate), a reaction catalyzed by the N-terminal domain. The sequence is that of Bifunctional protein GlmU from Thermosipho melanesiensis (strain DSM 12029 / CIP 104789 / BI429).